Reading from the N-terminus, the 165-residue chain is Glycine cleavage system H protein, mitochondrial (165 aa).

The region spanning 57-139 is the Lipoyl-binding domain; the sequence is NAIVGISSYA…YEKGWLFKVD (83 aa). K98 is subject to N6-lipoyllysine.

The protein belongs to the GcvH family. In terms of assembly, the glycine cleavage system is composed of four proteins: P, T, L and H. The cofactor is (R)-lipoate.

It is found in the mitochondrion. Its function is as follows. The glycine cleavage system catalyzes the degradation of glycine. The H protein shuttles the methylamine group of glycine from the P protein to the T protein. In Drosophila melanogaster (Fruit fly), this protein is Glycine cleavage system H protein, mitochondrial (ppl).